Reading from the N-terminus, the 133-residue chain is Thioredoxin H2 (133 aa).

Residues methionine 1–serine 22 are disordered. The Thioredoxin domain occupies serine 6–alanine 133. Catalysis depends on nucleophile residues cysteine 59 and cysteine 62. Cysteines 59 and 62 form a disulfide.

It belongs to the thioredoxin family. Plant H-type subfamily. In terms of assembly, interacts with MDH1.

It is found in the cytoplasm. Its subcellular location is the mitochondrion. Its function is as follows. Thiol-disulfide oxidoreductase probably involved in the redox regulation of a number of cytosolic enzymes. Possesses insulin disulfide bonds reducing activity. The protein is Thioredoxin H2 (TRX2) of Arabidopsis thaliana (Mouse-ear cress).